We begin with the raw amino-acid sequence, 316 residues long: Ribosomal protein L11 methyltransferase (316 aa).

4 residues coordinate S-adenosyl-L-methionine: Thr-160, Gly-181, Asp-203, and Asn-246.

This sequence belongs to the methyltransferase superfamily. PrmA family.

The protein resides in the cytoplasm. It catalyses the reaction L-lysyl-[protein] + 3 S-adenosyl-L-methionine = N(6),N(6),N(6)-trimethyl-L-lysyl-[protein] + 3 S-adenosyl-L-homocysteine + 3 H(+). Its function is as follows. Methylates ribosomal protein L11. In Heliobacterium modesticaldum (strain ATCC 51547 / Ice1), this protein is Ribosomal protein L11 methyltransferase.